Consider the following 284-residue polypeptide: ATP phosphoribosyltransferase (284 aa).

This sequence belongs to the ATP phosphoribosyltransferase family. Long subfamily. Mg(2+) is required as a cofactor.

The protein localises to the cytoplasm. It catalyses the reaction 1-(5-phospho-beta-D-ribosyl)-ATP + diphosphate = 5-phospho-alpha-D-ribose 1-diphosphate + ATP. It functions in the pathway amino-acid biosynthesis; L-histidine biosynthesis; L-histidine from 5-phospho-alpha-D-ribose 1-diphosphate: step 1/9. Feedback inhibited by histidine. Functionally, catalyzes the condensation of ATP and 5-phosphoribose 1-diphosphate to form N'-(5'-phosphoribosyl)-ATP (PR-ATP). Has a crucial role in the pathway because the rate of histidine biosynthesis seems to be controlled primarily by regulation of HisG enzymatic activity. This chain is ATP phosphoribosyltransferase, found in Methanococcoides burtonii (strain DSM 6242 / NBRC 107633 / OCM 468 / ACE-M).